Here is a 401-residue protein sequence, read N- to C-terminus: Argininosuccinate synthase (401 aa).

Residues 10–18 and alanine 38 contribute to the ATP site; that span reads AYSGGVDTS. L-citrulline is bound at residue tyrosine 89. Glycine 119 lines the ATP pocket. 3 residues coordinate L-aspartate: threonine 121, asparagine 125, and aspartate 126. Asparagine 125 lines the L-citrulline pocket. L-citrulline is bound by residues arginine 129, serine 177, serine 186, glutamate 262, and tyrosine 274.

Belongs to the argininosuccinate synthase family. Type 1 subfamily. In terms of assembly, homotetramer.

It is found in the cytoplasm. The catalysed reaction is L-citrulline + L-aspartate + ATP = 2-(N(omega)-L-arginino)succinate + AMP + diphosphate + H(+). It participates in amino-acid biosynthesis; L-arginine biosynthesis; L-arginine from L-ornithine and carbamoyl phosphate: step 2/3. This is Argininosuccinate synthase from Prochlorococcus marinus (strain MIT 9303).